The primary structure comprises 369 residues: Methionine import ATP-binding protein MetN 1 (369 aa).

The segment at 1-26 (MTTMTVPPSLLPLEPFPTAPDTRAST) is disordered. The ABC transporter domain occupies 29–265 (IRLHGLGKRY…PRHAVTRSLL (237 aa)). 62–69 (GRSGAGKS) is an ATP binding site.

Belongs to the ABC transporter superfamily. Methionine importer (TC 3.A.1.24) family. In terms of assembly, the complex is composed of two ATP-binding proteins (MetN), two transmembrane proteins (MetI) and a solute-binding protein (MetQ).

The protein localises to the cell inner membrane. It catalyses the reaction L-methionine(out) + ATP + H2O = L-methionine(in) + ADP + phosphate + H(+). The enzyme catalyses D-methionine(out) + ATP + H2O = D-methionine(in) + ADP + phosphate + H(+). In terms of biological role, part of the ABC transporter complex MetNIQ involved in methionine import. Responsible for energy coupling to the transport system. The polypeptide is Methionine import ATP-binding protein MetN 1 (Pseudomonas aeruginosa (strain UCBPP-PA14)).